Consider the following 476-residue polypeptide: Protein transport protein Sec61 subunit alpha (476 aa).

Over 2–33 (GIKFLEVIKPFCAVLPEIQKPERKIQFREKVL) the chain is Cytoplasmic. A helical membrane pass occupies residues 34–53 (WTAITLFIFLVCCQIPLFGI). Over 54–76 (MSSDSADPFYWMRVILASNRGTL) the chain is Lumenal. A helical transmembrane segment spans residues 77–96 (MELGISPIVTSGLIMQLLAG). At 97-117 (AKIIEVGDTPKDRALFNGAQK) the chain is on the cytoplasmic side. The chain crosses the membrane as a helical span at residues 118–138 (LFGMIITIGQAIVYVMTGMYG). At 139 to 144 (DPSEMG) the chain is on the lumenal side. The chain crosses the membrane as a helical span at residues 145-165 (AGICLVIIIQLFVAGLIVLLL). The Cytoplasmic segment spans residues 166–172 (DELLQKG). The chain crosses the membrane as a helical span at residues 173–193 (YGLGSGISLFIATNICETIVW). Residues 194 to 240 (KAFSPTTVNTGRGTEFEGAIIALFHLLATRTDKVRALREAFYRQNLP) are Lumenal-facing. A helical transmembrane segment spans residues 241–261 (NLMNLIATVFVFAVVIYFQGF). Residues 262–288 (RVDLPIKSARYRGQYNTYPIKLFYTSN) lie on the Cytoplasmic side of the membrane. Residues 289-309 (IPIILQSALVSNLYVISQMLS) traverse the membrane as a helical segment. The Lumenal portion of the chain corresponds to 310 to 354 (TRFSGNFLVNLLGTWSDTSTGGPARAYPVGGLCYYFSPPESFGSV). Residues 355–375 (LDDPVHASIYIVFMLGSCAFF) traverse the membrane as a helical segment. Residues 376-420 (SKTWIEVSGSSAKDVAKQLKEQQMVMRGHRETSMVHELNRYIPTA) lie on the Cytoplasmic side of the membrane. The helical transmembrane segment at 421-441 (AAFGGLCIGGLSVMADFLGAI) threads the bilayer. Residues 442–445 (GSGT) are Lumenal-facing. A helical transmembrane segment spans residues 446-462 (GILLAVTIIYQYFEIFV). Topologically, residues 463 to 476 (KEQSEMGSMGALLF) are cytoplasmic.

Belongs to the SecY/SEC61-alpha family. As to quaternary structure, the SEC61 channel-forming translocon complex consists of channel-forming core components SEC61A1, SEC61B and SEC61G and different auxiliary components such as SEC62 and SEC63. The SEC61 channel associates with the multi-pass translocon (MPT) complex.

The protein resides in the endoplasmic reticulum membrane. Functionally, component of SEC61 channel-forming translocon complex that mediates transport of signal peptide-containing precursor polypeptides across the endoplasmic reticulum (ER). Forms a ribosome receptor and a gated pore in the ER membrane, both functions required for cotranslational translocation of nascent polypeptides. May cooperate with auxiliary protein SEC62, SEC63 and HSPA5/BiP to enable post-translational transport of small presecretory proteins. The SEC61 channel is also involved in ER membrane insertion of transmembrane proteins: it mediates membrane insertion of the first few transmembrane segments of proteins, while insertion of subsequent transmembrane regions of multi-pass membrane proteins is mediated by the multi-pass translocon (MPT) complex. The chain is Protein transport protein Sec61 subunit alpha (sec61a) from Gadus ogac (Greenland cod).